The sequence spans 397 residues: Ribosomal RNA large subunit methyltransferase I (397 aa).

The PUA domain occupies 2-82 (TTSIYLVKGR…EVINVDFFVK (81 aa)).

This sequence belongs to the methyltransferase superfamily. RlmI family.

The protein resides in the cytoplasm. The catalysed reaction is cytidine(1962) in 23S rRNA + S-adenosyl-L-methionine = 5-methylcytidine(1962) in 23S rRNA + S-adenosyl-L-homocysteine + H(+). Specifically methylates the cytosine at position 1962 (m5C1962) of 23S rRNA. This chain is Ribosomal RNA large subunit methyltransferase I, found in Photobacterium profundum (strain SS9).